The following is a 207-amino-acid chain: High frequency lysogenization protein HflD homolog (207 aa).

It belongs to the HflD family.

The protein localises to the cytoplasm. The protein resides in the cell inner membrane. The polypeptide is High frequency lysogenization protein HflD homolog (Pseudomonas fluorescens (strain SBW25)).